The following is a 225-amino-acid chain: Triosephosphate isomerase (225 aa).

9–11 serves as a coordination point for substrate; it reads NMK. The Electrophile role is filled by His-93. Glu-141 serves as the catalytic Proton acceptor. Substrate contacts are provided by residues Ile-146, Gly-181, and 202-203; that span reads AS.

The protein belongs to the triosephosphate isomerase family. In terms of assembly, homotetramer; dimer of dimers.

It is found in the cytoplasm. It carries out the reaction D-glyceraldehyde 3-phosphate = dihydroxyacetone phosphate. It functions in the pathway carbohydrate biosynthesis; gluconeogenesis. The protein operates within carbohydrate degradation; glycolysis; D-glyceraldehyde 3-phosphate from glycerone phosphate: step 1/1. Its function is as follows. Involved in the gluconeogenesis. Catalyzes stereospecifically the conversion of dihydroxyacetone phosphate (DHAP) to D-glyceraldehyde-3-phosphate (G3P). The protein is Triosephosphate isomerase of Caldivirga maquilingensis (strain ATCC 700844 / DSM 13496 / JCM 10307 / IC-167).